Reading from the N-terminus, the 348-residue chain is Isopentenyl-diphosphate delta-isomerase (348 aa).

Substrate is bound at residue 9-10 (RK). FMN contacts are provided by residues 68–70 (AMT), Ser-98, and Asn-127. Position 157 (Gln-157) interacts with substrate. Glu-158 is a binding site for Mg(2+). Residues Lys-188, Ser-213, Thr-218, and 286–287 (AG) contribute to the FMN site.

Belongs to the IPP isomerase type 2 family. As to quaternary structure, homooctamer. Dimer of tetramers. It depends on FMN as a cofactor. NADPH is required as a cofactor. Requires Mg(2+) as cofactor.

Its subcellular location is the cytoplasm. It carries out the reaction isopentenyl diphosphate = dimethylallyl diphosphate. Functionally, involved in the biosynthesis of isoprenoids. Catalyzes the 1,3-allylic rearrangement of the homoallylic substrate isopentenyl (IPP) to its allylic isomer, dimethylallyl diphosphate (DMAPP). This chain is Isopentenyl-diphosphate delta-isomerase, found in Limosilactobacillus reuteri subsp. reuteri (strain JCM 1112) (Lactobacillus reuteri).